The sequence spans 174 residues: Shikimate kinase (174 aa).

14–19 (GAGKST) contacts ATP. Mg(2+) is bound at residue S18. Substrate-binding residues include D36, R60, and G82. R120 lines the ATP pocket. A substrate-binding site is contributed by R141. An ATP-binding site is contributed by R158.

Belongs to the shikimate kinase family. As to quaternary structure, monomer. Mg(2+) is required as a cofactor.

Its subcellular location is the cytoplasm. It catalyses the reaction shikimate + ATP = 3-phosphoshikimate + ADP + H(+). It participates in metabolic intermediate biosynthesis; chorismate biosynthesis; chorismate from D-erythrose 4-phosphate and phosphoenolpyruvate: step 5/7. Functionally, catalyzes the specific phosphorylation of the 3-hydroxyl group of shikimic acid using ATP as a cosubstrate. In Buchnera aphidicola subsp. Baizongia pistaciae (strain Bp), this protein is Shikimate kinase.